The following is a 222-amino-acid chain: UPF0441 protein CKO_04429 (222 aa).

Over residues 177–194 (TVPKTAMAPKPATTTTVT) the composition is skewed to low complexity. The disordered stretch occupies residues 177-222 (TVPKTAMAPKPATTTTVTRGGFGESVAKQSTMQRSATGTSNRSMGG). Positions 203–222 (AKQSTMQRSATGTSNRSMGG) are enriched in polar residues.

This sequence belongs to the UPF0441 family.

The sequence is that of UPF0441 protein CKO_04429 from Citrobacter koseri (strain ATCC BAA-895 / CDC 4225-83 / SGSC4696).